The primary structure comprises 114 residues: Phosphoribosyl-AMP cyclohydrolase (114 aa).

Aspartate 76 serves as a coordination point for Mg(2+). Cysteine 77 is a binding site for Zn(2+). Mg(2+)-binding residues include aspartate 78 and aspartate 80. Residues cysteine 93 and cysteine 100 each contribute to the Zn(2+) site.

Belongs to the PRA-CH family. As to quaternary structure, homodimer. The cofactor is Mg(2+). Zn(2+) is required as a cofactor.

Its subcellular location is the cytoplasm. It carries out the reaction 1-(5-phospho-beta-D-ribosyl)-5'-AMP + H2O = 1-(5-phospho-beta-D-ribosyl)-5-[(5-phospho-beta-D-ribosylamino)methylideneamino]imidazole-4-carboxamide. Its pathway is amino-acid biosynthesis; L-histidine biosynthesis; L-histidine from 5-phospho-alpha-D-ribose 1-diphosphate: step 3/9. Functionally, catalyzes the hydrolysis of the adenine ring of phosphoribosyl-AMP. The chain is Phosphoribosyl-AMP cyclohydrolase from Streptococcus sanguinis (strain SK36).